The primary structure comprises 256 residues: Protein crossbronx-like (256 aa).

One can recognise a UBC core domain in the interval 17 to 179 (NQGYKVLAEY…AKVSILWSCQ (163 aa)).

The protein belongs to the ubiquitin-conjugating enzyme family. FTS subfamily.

This is Protein crossbronx-like from Drosophila virilis (Fruit fly).